Reading from the N-terminus, the 148-residue chain is MIDVVEIQKILPHRFPFLLIDRVTELEPAKHIVAYKNVTIGEPIFQGHFPGHPIYPGVMIVEGMAQAGGVLAFKSMSDEHQADIENKVVYFMSIDKAKFRHPVRPGDRLEYRLEVLKHKGNIWVLDGKAYIDGNLCAEAELKAMIVDK.

His48 is an active-site residue.

It belongs to the thioester dehydratase family. FabZ subfamily.

It localises to the cytoplasm. It catalyses the reaction a (3R)-hydroxyacyl-[ACP] = a (2E)-enoyl-[ACP] + H2O. Functionally, involved in unsaturated fatty acids biosynthesis. Catalyzes the dehydration of short chain beta-hydroxyacyl-ACPs and long chain saturated and unsaturated beta-hydroxyacyl-ACPs. This Campylobacter curvus (strain 525.92) protein is 3-hydroxyacyl-[acyl-carrier-protein] dehydratase FabZ.